A 321-amino-acid polypeptide reads, in one-letter code: tRNA U34 carboxymethyltransferase (321 aa).

Carboxy-S-adenosyl-L-methionine contacts are provided by residues Lys-90, Trp-104, Lys-109, Gly-129, 151–153 (DPT), 180–181 (IE), Met-195, Tyr-199, and Arg-314.

The protein belongs to the class I-like SAM-binding methyltransferase superfamily. CmoB family. As to quaternary structure, homotetramer.

It catalyses the reaction carboxy-S-adenosyl-L-methionine + 5-hydroxyuridine(34) in tRNA = 5-carboxymethoxyuridine(34) in tRNA + S-adenosyl-L-homocysteine + H(+). Catalyzes carboxymethyl transfer from carboxy-S-adenosyl-L-methionine (Cx-SAM) to 5-hydroxyuridine (ho5U) to form 5-carboxymethoxyuridine (cmo5U) at position 34 in tRNAs. This Haemophilus influenzae (strain PittGG) protein is tRNA U34 carboxymethyltransferase.